We begin with the raw amino-acid sequence, 72 residues long: Subtilisin-chymotrypsin inhibitor-2B (72 aa).

Belongs to the protease inhibitor I13 (potato type I serine protease inhibitor) family.

Its function is as follows. Inhibits both subtilisin and chymotrypsin. The chain is Subtilisin-chymotrypsin inhibitor-2B from Hordeum vulgare (Barley).